Consider the following 178-residue polypeptide: Ribosome maturation factor RimP (178 aa).

Belongs to the RimP family.

The protein resides in the cytoplasm. Its function is as follows. Required for maturation of 30S ribosomal subunits. This chain is Ribosome maturation factor RimP, found in Streptococcus pyogenes serotype M1.